A 695-amino-acid chain; its full sequence is A-kinase anchor protein 17A (695 aa).

The tract at residues 83–112 (VENKSLVKSFLACLDGKTIKLSGFSDILKV) is PKA-RI and PKA-RII subunit binding domain. K118 is covalently cross-linked (Glycyl lysine isopeptide (Lys-Gly) (interchain with G-Cter in SUMO1); alternate). Residue K118 forms a Glycyl lysine isopeptide (Lys-Gly) (interchain with G-Cter in SUMO2); alternate linkage. The RRM domain maps to 147–256 (DTIHLEGLPC…KAVACNIKVS (110 aa)). The interval 279-337 (QELEQQREEQKRREKEAEERQRAEERKQKELEELERERKREEKLRKREQKQRDRELRRN) is disordered. Positions 425–454 (LGLQRKERELRERLLSILLSKKPDDSHTHD) are PKA-RI-alpha subunit binding domain. Residues 482 to 695 (TTLHPLGGQP…PSRHRSTWNR (214 aa)) form a disordered region. S537 is subject to Phosphoserine. The segment covering 567-585 (VSRKDTRSEQDKCNREPSK) has biased composition (basic and acidic residues). Basic residues-rich tracts occupy residues 598–609 (RHKRERSRARRA) and 618–628 (RKERRPHKKHA). A compositionally biased stretch (basic and acidic residues) spans 629-644 (YKDDSPRRRSTSPDHT). S633 is modified (phosphoserine). Composition is skewed to basic residues over residues 645–658 (RSRR…HRRE) and 666–695 (SASR…TWNR).

In terms of assembly, monomer. Component of the spliceosome. Interacts with ZRANB2 and SFRS1/ASF through its Arg/Ser-rich domain. Interacts with RI and RII subunits of PKA. Widely expressed. Found in heart, brain, lung, liver, skeletal muscle, kidney and pancreas. Expressed in activated B-cells and placenta. Expressed in all cell lines tested including Jurkat-TAg, U-937 and HEK293 cells.

It is found in the nucleus speckle. Its function is as follows. Splice factor regulating alternative splice site selection for certain mRNA precursors. Mediates regulation of pre-mRNA splicing in a PKA-dependent manner. The polypeptide is A-kinase anchor protein 17A (AKAP17A) (Homo sapiens (Human)).